The primary structure comprises 213 residues: Pyridoxine/pyridoxamine 5'-phosphate oxidase (213 aa).

Substrate is bound by residues 8-11 (RREY) and lysine 66. Residues 61–66 (RIVLLK), 76–77 (YT), arginine 82, lysine 83, and glutamine 105 contribute to the FMN site. Residues tyrosine 123, arginine 127, and serine 131 each contribute to the substrate site. FMN contacts are provided by residues 140 to 141 (QS) and tryptophan 185. 191-193 (RLH) serves as a coordination point for substrate. Arginine 195 is an FMN binding site.

This sequence belongs to the pyridoxamine 5'-phosphate oxidase family. In terms of assembly, homodimer. FMN is required as a cofactor.

It catalyses the reaction pyridoxamine 5'-phosphate + O2 + H2O = pyridoxal 5'-phosphate + H2O2 + NH4(+). It carries out the reaction pyridoxine 5'-phosphate + O2 = pyridoxal 5'-phosphate + H2O2. It functions in the pathway cofactor metabolism; pyridoxal 5'-phosphate salvage; pyridoxal 5'-phosphate from pyridoxamine 5'-phosphate: step 1/1. Its pathway is cofactor metabolism; pyridoxal 5'-phosphate salvage; pyridoxal 5'-phosphate from pyridoxine 5'-phosphate: step 1/1. Its function is as follows. Catalyzes the oxidation of either pyridoxine 5'-phosphate (PNP) or pyridoxamine 5'-phosphate (PMP) into pyridoxal 5'-phosphate (PLP). The protein is Pyridoxine/pyridoxamine 5'-phosphate oxidase of Pseudoalteromonas atlantica (strain T6c / ATCC BAA-1087).